The primary structure comprises 570 residues: Proline--tRNA ligase (570 aa).

This sequence belongs to the class-II aminoacyl-tRNA synthetase family. ProS type 1 subfamily. Homodimer.

It is found in the cytoplasm. The enzyme catalyses tRNA(Pro) + L-proline + ATP = L-prolyl-tRNA(Pro) + AMP + diphosphate. Its function is as follows. Catalyzes the attachment of proline to tRNA(Pro) in a two-step reaction: proline is first activated by ATP to form Pro-AMP and then transferred to the acceptor end of tRNA(Pro). As ProRS can inadvertently accommodate and process non-cognate amino acids such as alanine and cysteine, to avoid such errors it has two additional distinct editing activities against alanine. One activity is designated as 'pretransfer' editing and involves the tRNA(Pro)-independent hydrolysis of activated Ala-AMP. The other activity is designated 'posttransfer' editing and involves deacylation of mischarged Ala-tRNA(Pro). The misacylated Cys-tRNA(Pro) is not edited by ProRS. The polypeptide is Proline--tRNA ligase (proS) (Aquifex aeolicus (strain VF5)).